The sequence spans 113 residues: Small ribosomal subunit protein uS14m (113 aa).

It belongs to the universal ribosomal protein uS14 family. As to quaternary structure, component of the mitochondrial small ribosomal subunit (mt-SSU). Mature N.crassa 74S mitochondrial ribosomes consist of a small (37S) and a large (54S) subunit. The 37S small subunit contains a 16S ribosomal RNA (16S mt-rRNA) and 32 different proteins. The 54S large subunit contains a 23S rRNA (23S mt-rRNA) and 42 different proteins.

The protein resides in the mitochondrion. Its function is as follows. Component of the mitochondrial ribosome (mitoribosome), a dedicated translation machinery responsible for the synthesis of mitochondrial genome-encoded proteins, including at least some of the essential transmembrane subunits of the mitochondrial respiratory chain. The mitoribosomes are attached to the mitochondrial inner membrane and translation products are cotranslationally integrated into the membrane. The sequence is that of Small ribosomal subunit protein uS14m (mrp2) from Neurospora crassa (strain ATCC 24698 / 74-OR23-1A / CBS 708.71 / DSM 1257 / FGSC 987).